Consider the following 409-residue polypeptide: O-methyltransferase pyiA (409 aa).

Residues 1-21 are compositionally biased toward polar residues; sequence MASQDGTTELLSQSVNSTCIP. The tract at residues 1–46 is disordered; that stretch reads MASQDGTTELLSQSVNSTCIPGSTYHVDRGRASSASTPPTSPPLSE. An S-adenosyl-L-methionine-binding site is contributed by Asp-271. His-317 (proton acceptor) is an active-site residue.

Belongs to the class I-like SAM-binding methyltransferase superfamily. Cation-independent O-methyltransferase family.

It participates in mycotoxin biosynthesis. O-methyltransferase; part of the gene cluster that mediates the biosynthesis of the mycotoxin pyrichalasin H, a tyrosine-derived cytochalasan that inhibits the growth of rice seedlings, but also inhibits lymphocyte capping and actin polymerization and alters cell morphology. Pyrichalasin H is indicated as the responsible agent for the genus-specific pathogenicity of M.grisea toward crabgrass. The first step in the pathway is catalyzed by the O-methyltransferase pyiA which methylates free tyrosine to generate the precursor O-methyltyrosine. The hybrid PKS-NRPS pyiS, assisted by the enoyl reductase pyiC, are responsible for fusion of the O-methyltyrosine precursor and the polyketide backbone. The polyketide synthase module (PKS) of pyiS is responsible for the synthesis of the polyketide backbone and the downstream nonribosomal peptide synthetase (NRPS) amidates the carboxyl end of the polyketide with the O-methyltyrosine precursor. As the NRPS A-domain demonstrates substrate tolerance, pyiS can also use phenylalanine, tyrosine and even para-chlorophenylalanine as amino acid precursor, which leads to the production of novel cytochalasans, including halogenated cytochalasans. Because pyiS lacks a designated enoylreductase (ER) domain, the required activity is provided the enoyl reductase pyiC. Reduction by the hydrolyase pyiE leads to 1,5-dihydropyrrolone, which is substrate for dehydration and intra-molecular Diels-Alder cyclization by the Diels-Alderase pyiF to yield the required isoindolone-fused macrocycle. The tailoring cytochrome P450 monooxygenases piyD and piyG catalyze the hydroxylation at C-18 and C-7, respectivily, whereas the short-chain dehydrogenase/reductase pyiH reduces the carbonyl at C-21 in preparation for the transfer of an acetyl group by the acetyltransferase pyiB. These 3 reactions whose order is not clear yet, lead to the production of O-methylpyrichalasin J, a deacetylated pyrichalasin H. Finally, pyiB to converts O-methylpyrichalasin J into the final product pyrichalasin H via acetylation of C-21. This Pyricularia grisea (Crabgrass-specific blast fungus) protein is O-methyltransferase pyiA.